Consider the following 62-residue polypeptide: uncharacterized protein (62 aa).

This is an uncharacterized protein from Homo sapiens (Human).